A 149-amino-acid chain; its full sequence is Ribonuclease pancreatic (149 aa).

The signal sequence occupies residues 1–25 (MGLENSLILFSLLVLVLGWVQPSLG). The tract at residues 25 to 62 (GKESSPDKFKRQHMDTEGSSKSSPTYCNQMRSPQEMTK) is disordered. The segment covering 28–42 (SSPDKFKRQHMDTEG) has biased composition (basic and acidic residues). 2 residues coordinate substrate: lysine 32 and arginine 35. Histidine 37 serves as the catalytic Proton acceptor. Over residues 43-61 (SSKSSPTYCNQMRSPQEMT) the composition is skewed to polar residues. Disulfide bonds link cysteine 51/cysteine 109, cysteine 65/cysteine 120, cysteine 83/cysteine 135, and cysteine 90/cysteine 97. Residues 66 to 70 (KPVNT) and lysine 91 contribute to the substrate site. The active-site Proton donor is histidine 144.

This sequence belongs to the pancreatic ribonuclease family. In terms of assembly, monomer. Interacts with and forms tight 1:1 complexes with RNH1. Dimerization of two such complexes may occur. Interaction with RNH1 inhibits this protein.

It localises to the secreted. It carries out the reaction an [RNA] containing cytidine + H2O = an [RNA]-3'-cytidine-3'-phosphate + a 5'-hydroxy-ribonucleotide-3'-[RNA].. The catalysed reaction is an [RNA] containing uridine + H2O = an [RNA]-3'-uridine-3'-phosphate + a 5'-hydroxy-ribonucleotide-3'-[RNA].. In terms of biological role, endonuclease that catalyzes the cleavage of RNA on the 3' side of pyrimidine nucleotides. Acts on single-stranded and double-stranded RNA. In Sundamys muelleri (Mueller's giant sunda rat), this protein is Ribonuclease pancreatic (RNASE1).